A 305-amino-acid polypeptide reads, in one-letter code: RNA-binding protein rnp-1 (305 aa).

The 70-residue stretch at 3 to 72 (SKLFVGNLPD…KVVNIKKSTS (70 aa)) folds into the RRM domain. A CCHC-type zinc finger spans residues 84–97 (CFRCQSDEHRTPQC). The segment at 284–305 (QQIQHQQATGSPAPVPAPPRLY) is disordered. A compositionally biased stretch (pro residues) spans 296 to 305 (APVPAPPRLY).

Expressed throughout the germline.

Functionally, RNA-binding protein that is required for the germ line to transition from spermatogenesis to oogenesis and allow for normal oocyte development. The polypeptide is RNA-binding protein rnp-1 (Caenorhabditis elegans).